The following is a 960-amino-acid chain: Gamma-aminobutyric acid type B receptor subunit 1 (960 aa).

The first 19 residues, 1–19 (MLLLLLVPLFLRPLGAGGA), serve as a signal peptide directing secretion. At 20 to 590 (QTPNATSEGC…KTFRFLSQKL (571 aa)) the chain is on the extracellular side. N-linked (GlcNAc...) asparagine glycans are attached at residues Asn23 and Asn83. 2 consecutive Sushi domains span residues 29–95 (CQII…PSRC) and 97–158 (RICS…HCQV). Cystine bridges form between Cys99-Cys144, Cys130-Cys156, and Cys219-Cys245. 4 residues coordinate 4-aminobutanoate: Ser246, Ser269, His286, and Tyr366. Cys375 and Cys409 are joined by a disulfide. N-linked (GlcNAc...) asparagine glycans are attached at residues Asn408 and Asn439. Residue Glu465 coordinates 4-aminobutanoate. N-linked (GlcNAc...) asparagine glycosylation is found at Asn481, Asn501, and Asn513. Residues 591–611 (FISVSVLSSLGIVLAVVCLSF) form a helical membrane-spanning segment. Over 612-630 (NIYNSHVRYIQNSQPNLNN) the chain is Cytoplasmic. A helical membrane pass occupies residues 631-651 (LTAVGCSLALAAVFPLGLDGY). The Extracellular portion of the chain corresponds to 652-666 (HIGRSQFPFVCQARL). A helical membrane pass occupies residues 667-687 (WLLGLGFSLGYGSMFTKIWWV). The Cytoplasmic segment spans residues 688 to 709 (HTVFTKKEEKKEWRKTLEPWKL). Residues 710-730 (YATVGLLVGMDVLTLAIWQIV) traverse the membrane as a helical segment. At 731-767 (DPLHRTIETFAKEEPKEDIDVSILPQLEHCSSKKMNT) the chain is on the extracellular side. The helical transmembrane segment at 768–788 (WLGIFYGYKGLLLLLGIFLAY) threads the bilayer. Residues 789-803 (ETKSVSTEKINDHRA) are Cytoplasmic-facing. Residues 804–824 (VGMAIYNVAVLCLITAPVTMI) form a helical membrane-spanning segment. Residues 825-832 (LSSQQDAA) lie on the Extracellular side of the membrane. Residues 833–853 (FAFASLAIVFSSYITLVVLFV) form a helical membrane-spanning segment. Topologically, residues 854–960 (PKMRRLITRG…DGSRVHLLYK (107 aa)) are cytoplasmic. A compositionally biased stretch (polar residues) spans 866–879 (QSETQDTMKTGSST). Disordered stretches follow at residues 866 to 891 (QSETQDTMKTGSSTNNNEEEKSRLLE) and 908 to 960 (VSEL…LLYK). A coiled-coil region spans residues 870–924 (QDTMKTGSSTNNNEEEKSRLLEKENRELEKIIAEKEERVSELRHQLQSRQQLRSR). Residue Thr872 is modified to Phosphothreonine. The tract at residues 887 to 915 (SRLLEKENRELEKIIAEKEERVSELRHQL) is interaction with ATF4. Thr929 carries the post-translational modification Phosphothreonine.

This sequence belongs to the G-protein coupled receptor 3 family. GABA-B receptor subfamily. In terms of assembly, heterodimer of GABBR1 and GABBR2. Homodimers may form, but are inactive. Interacts (via C-terminus) with ATF4 (via leucine zipper domain). Interacts with JAKMIP1. In terms of tissue distribution, ubiquitously expressed in tissues including the forebrain, cerebellum, eye, atrium, ventricle, lung, stomach, small intestine, colon, liver, spleen, kidney, urinary bladder and skeletal muscle. Expressed at low levels in testis, and more highly in brain regions. Expression is high the brain regions including cerebral cortical layers, with higher expression in VIb than in the II-V layers, pyramidal CA1-CA3 cell layers and granular cell layers of the hippocampus, granular cell layers of the dentate gyrus, including the caudate, putamen, nucleus accumbens and olfactory tubercle, the granular layer cell layers of the medial habenula, in the cerebellum, predominantly in Purkinje cells, and in the granule cell layer. Also expressed in areas of the brain including the medial geniculate nucleus, substantia nigra, pars compacta, the ventral tegmental area, and in several thalamic, amygdaloid and hypothalamic nuclei, such as the arcuate nucleus of the hypothalamus and mammilary bodies of the hypothalamus. Expressed in the amacrine cell of the retina. Expressed in the brain, spinal cord, stomach, testis, adrenal gland, pituitary, spleen and prostate. As to expression, expressed in the brain, spinal cord, stomach, testis, kidney and liver. In terms of tissue distribution, ubiquitously expressed. Expressed in the forebrain, cerebellum, eye, kidney and urinary bladder. As to expression, ubiquitously expressed with high expression in the pyramidal CA1-CA3 cell layers of the hippocampus, the granule cell layers of the dentate gyrus and olfactory tubercle, the whole cortex, and Purkinje cells of the cerebellum. Moderate expression in the granule cell layer of the cerebellum.

It localises to the cell membrane. The protein localises to the postsynaptic cell membrane. The protein resides in the cell projection. It is found in the dendrite. Its subcellular location is the perikaryon. In terms of biological role, component of a heterodimeric G-protein coupled receptor for GABA, formed by GABBR1 and GABBR2. Within the heterodimeric GABA receptor, only GABBR1 seems to bind agonists, while GABBR2 mediates coupling to G proteins. Ligand binding causes a conformation change that triggers signaling via guanine nucleotide-binding proteins (G proteins) and modulates the activity of down-stream effectors, such as adenylate cyclase. Signaling inhibits adenylate cyclase, stimulates phospholipase A2, activates potassium channels, inactivates voltage-dependent calcium-channels and modulates inositol phospholipid hydrolysis. Calcium is required for high affinity binding to GABA. Plays a critical role in the fine-tuning of inhibitory synaptic transmission. Pre-synaptic GABA receptor inhibits neurotransmitter release by down-regulating high-voltage activated calcium channels, whereas postsynaptic GABA receptor decreases neuronal excitability by activating a prominent inwardly rectifying potassium (Kir) conductance that underlies the late inhibitory postsynaptic potentials. Not only implicated in synaptic inhibition but also in hippocampal long-term potentiation, slow wave sleep, muscle relaxation and antinociception. This chain is Gamma-aminobutyric acid type B receptor subunit 1 (Gabbr1), found in Rattus norvegicus (Rat).